The following is a 335-amino-acid chain: Probable peptide ABC transporter ATP-binding protein y4tR (335 aa).

Residues Val15–Met264 enclose the ABC transporter domain. Residue Gly49–Ser56 participates in ATP binding.

Belongs to the ABC transporter superfamily.

Its subcellular location is the cell inner membrane. Its function is as follows. Probably part of a binding-protein-dependent transport system y4tOPQRS for a peptide. Probably responsible for energy coupling to the transport system. In Sinorhizobium fredii (strain NBRC 101917 / NGR234), this protein is Probable peptide ABC transporter ATP-binding protein y4tR.